Reading from the N-terminus, the 126-residue chain is Small ribosomal subunit protein uS12 (126 aa).

A 3-methylthioaspartic acid modification is found at aspartate 89.

It belongs to the universal ribosomal protein uS12 family. In terms of assembly, part of the 30S ribosomal subunit. Contacts proteins S8 and S17. May interact with IF1 in the 30S initiation complex.

In terms of biological role, with S4 and S5 plays an important role in translational accuracy. Interacts with and stabilizes bases of the 16S rRNA that are involved in tRNA selection in the A site and with the mRNA backbone. Located at the interface of the 30S and 50S subunits, it traverses the body of the 30S subunit contacting proteins on the other side and probably holding the rRNA structure together. The combined cluster of proteins S8, S12 and S17 appears to hold together the shoulder and platform of the 30S subunit. This Polynucleobacter asymbioticus (strain DSM 18221 / CIP 109841 / QLW-P1DMWA-1) (Polynucleobacter necessarius subsp. asymbioticus) protein is Small ribosomal subunit protein uS12.